A 789-amino-acid chain; its full sequence is Molybdenum cofactor sulfurase (789 aa).

Lys251 carries the post-translational modification N6-(pyridoxal phosphate)lysine. The active site involves Cys422. The MOSC domain occupies 628–789; sequence GDQVAQWLDQ…LICGETLEVD (162 aa). At Ser741 the chain carries Phosphoserine.

It belongs to the class-V pyridoxal-phosphate-dependent aminotransferase family. MOCOS subfamily. Pyridoxal 5'-phosphate is required as a cofactor.

It carries out the reaction Mo-molybdopterin + L-cysteine + AH2 = thio-Mo-molybdopterin + L-alanine + A + H2O. It functions in the pathway cofactor biosynthesis; molybdopterin biosynthesis. Functionally, sulfurates the molybdenum cofactor. Sulfation of molybdenum is essential for xanthine dehydrogenase (XDH) and aldehyde oxidase (ADO) enzymes in which molybdenum cofactor is liganded by 1 oxygen and 1 sulfur atom in active form. The sequence is that of Molybdenum cofactor sulfurase from Drosophila willistoni (Fruit fly).